The chain runs to 208 residues: MGMGSNGELKYEISQNAYIKLVLHSLRHKTAAVNGVLVGRISPKDDGVVEISDSVPLFHSNLALLPPLEISLIMIEEHYVAQGLSIVGYFHANERFDDVELCGVAKNIGDHISRYFPQAPILLLNNKKLEALSKGKERSPVMQLCVKDASKNWRVVGADGGSKLLLKEPSANVVLSDYISSEKWKDVTDVDDHLDDVTKDWLNPGLFN.

One can recognise an MPN domain in the interval 11-146 (YEISQNAYIK…ERSPVMQLCV (136 aa)).

The protein belongs to the EMC8/EMC9 family.

In Arabidopsis thaliana (Mouse-ear cress), this protein is ER membrane protein complex subunit 8/9 homolog (EMB2731).